Consider the following 655-residue polypeptide: Probable potassium transport system protein Kup (655 aa).

The next 12 helical transmembrane spans lie at 19–39 (GLLISLGIIYGDIGTSPLYVM), 42–62 (IAGGNVISENLILGGLSCVFW), 102–122 (VWPAMIGGAAMLADGIITPPI), 132–152 (LIFNKDIPTIPIVLAIIVMLF), 161–181 (IVGKFFGPIMFIWFAMLATLG), 214–234 (SGFWLLGAVFLCTTGAEALYS), 246–266 (ISWIFVKLALLINYFGQGAWI), 282–302 (IMPEWFIVYGIIIATMAAIIA), 338–358 (LFIPSINLLLLAGCIFVVLWF), 370–390 (LAINITFLMTTILLAYYLLII), 395–415 (FIWVGLLILMYLIIEVSFLVA), and 420–440 (FFHGGYFTLISSGILAFIMII).

The protein belongs to the HAK/KUP transporter (TC 2.A.72) family.

It is found in the cell inner membrane. It carries out the reaction K(+)(in) + H(+)(in) = K(+)(out) + H(+)(out). Functionally, transport of potassium into the cell. Likely operates as a K(+):H(+) symporter. In Cytophaga hutchinsonii (strain ATCC 33406 / DSM 1761 / CIP 103989 / NBRC 15051 / NCIMB 9469 / D465), this protein is Probable potassium transport system protein Kup.